A 507-amino-acid chain; its full sequence is MQQAIEQYATGGALRFNGIGKVFPGVKALSDISFEARPGSVHALMGENGAGKSTLLKILGGSYQPNSGTLQIGEQSYQFKSTAESIAAGVAVIHQELHLVPEMTVAENLLLGHMPNRFGLINRGAMYRRAGELLKGLADEIDPHTRLGDLSLGQRQLVEIAKAMSRNAHVIAFDEPTSSLSAREIDRLMAIIVRLRDEGRVILYVSHRMEEIFRVCDAVTVFKDGRFVKTFEQMADLDHDRLVTCMVGRDIQNIYNYRPRQHQGPSLRVTGLLGPGLHEPVTFAVQKGEVLGFFGLVGAGRTELFRLLSGLTRSSAGTLQLDGKPLTLKSPRDAIEAGILLCPEDRKKEGIVPLSSVAENINIGARPRHVNLGCLIQGRWERDNARSQIKSMNVKTPSPEQQIMFLSGGNQQKAILGRWLSMPMKVLLLDEPTRGIDVGAKSEIYEIIHNLAADGIAVIVVSSDLMEVMGISDRILVMSEGAITGELNRDEADESRLLQLALPRTRG.

2 ABC transporter domains span residues 14 to 249 (LRFN…MVGR) and 249 to 505 (RDIQ…LPRT). 46 to 53 (GENGAGKS) is an ATP binding site.

This sequence belongs to the ABC transporter superfamily. Arabinose importer (TC 3.A.1.2.2) family. The complex is composed of two ATP-binding proteins (AraG), two transmembrane proteins (AraH) and a solute-binding protein (AraF).

It is found in the cell inner membrane. The catalysed reaction is L-arabinose(out) + ATP + H2O = L-arabinose(in) + ADP + phosphate + H(+). Functionally, part of the ABC transporter complex AraFGH involved in arabinose import. Responsible for energy coupling to the transport system. The chain is Arabinose import ATP-binding protein AraG from Pseudomonas syringae pv. syringae (strain B728a).